Reading from the N-terminus, the 419-residue chain is Enolase (419 aa).

Q161 contacts (2R)-2-phosphoglycerate. E205 serves as the catalytic Proton donor. Residues D240, E283, and D309 each contribute to the Mg(2+) site. (2R)-2-phosphoglycerate-binding residues include K334, R363, S364, and K385. Residue K334 is the Proton acceptor of the active site.

It belongs to the enolase family. The cofactor is Mg(2+).

It localises to the cytoplasm. The protein resides in the secreted. Its subcellular location is the cell surface. It carries out the reaction (2R)-2-phosphoglycerate = phosphoenolpyruvate + H2O. The protein operates within carbohydrate degradation; glycolysis; pyruvate from D-glyceraldehyde 3-phosphate: step 4/5. Catalyzes the reversible conversion of 2-phosphoglycerate (2-PG) into phosphoenolpyruvate (PEP). It is essential for the degradation of carbohydrates via glycolysis. In Saccharolobus islandicus (strain L.S.2.15 / Lassen #1) (Sulfolobus islandicus), this protein is Enolase.